A 148-amino-acid polypeptide reads, in one-letter code: MTRTVLVLNGPNLNLLGTREPQTYGRRTLGEIADECAAFAETRGFAVDFRQTNQEGQLLDWIHQARGRVAGIVINPAAWTHTSVALRDALAAVELPVVEVHLSNVHQREAFRHHSYVSPVALGVICGFGSLGYRLALEHFAERFEAAA.

The active-site Proton acceptor is Tyr-24. Residues Asn-75, His-81, and Asp-88 each coordinate substrate. His-101 acts as the Proton donor in catalysis. Residues 102–103 (LS) and Arg-112 each bind substrate.

The protein belongs to the type-II 3-dehydroquinase family. As to quaternary structure, homododecamer.

It carries out the reaction 3-dehydroquinate = 3-dehydroshikimate + H2O. It functions in the pathway metabolic intermediate biosynthesis; chorismate biosynthesis; chorismate from D-erythrose 4-phosphate and phosphoenolpyruvate: step 3/7. In terms of biological role, catalyzes a trans-dehydration via an enolate intermediate. The sequence is that of 3-dehydroquinate dehydratase 2 (aroQ2) from Pseudomonas aeruginosa (strain ATCC 15692 / DSM 22644 / CIP 104116 / JCM 14847 / LMG 12228 / 1C / PRS 101 / PAO1).